The chain runs to 133 residues: Cytochrome c-type biogenesis protein CcmE (133 aa).

At 1–7 (MKRKHKR) the chain is on the cytoplasmic side. Residues 8–28 (LLFIIVTFIIFGSSVVIVLNK) form a helical; Signal-anchor for type II membrane protein membrane-spanning segment. The Periplasmic portion of the chain corresponds to 29 to 133 (LRSNISFFFT…NYKPGKYRAK (105 aa)). Histidine 121 and tyrosine 125 together coordinate heme.

It belongs to the CcmE/CycJ family.

The protein resides in the cell inner membrane. Heme chaperone required for the biogenesis of c-type cytochromes. Transiently binds heme delivered by CcmC and transfers the heme to apo-cytochromes in a process facilitated by CcmF and CcmH. This chain is Cytochrome c-type biogenesis protein CcmE, found in Ehrlichia canis (strain Jake).